A 533-amino-acid polypeptide reads, in one-letter code: Putative sel1-like repeat-containing protein L21 (533 aa).

Sel1-like repeat units lie at residues 105-140 (VLSQ…NQGL), 141-172 (SFAQ…QSGY), 173-206 (YLSN…NQGC), 207-242 (NISQ…KQGN), and 243-278 (YFSQ…NCGH).

In Acanthamoeba polyphaga mimivirus (APMV), this protein is Putative sel1-like repeat-containing protein L21.